Here is an 89-residue protein sequence, read N- to C-terminus: Small ribosomal subunit protein uS15 (89 aa).

This sequence belongs to the universal ribosomal protein uS15 family. Part of the 30S ribosomal subunit. Forms a bridge to the 50S subunit in the 70S ribosome, contacting the 23S rRNA.

Its function is as follows. One of the primary rRNA binding proteins, it binds directly to 16S rRNA where it helps nucleate assembly of the platform of the 30S subunit by binding and bridging several RNA helices of the 16S rRNA. In terms of biological role, forms an intersubunit bridge (bridge B4) with the 23S rRNA of the 50S subunit in the ribosome. The chain is Small ribosomal subunit protein uS15 from Acholeplasma laidlawii (strain PG-8A).